We begin with the raw amino-acid sequence, 403 residues long: L-alanine/L-glutamate racemase (403 aa).

Residues 62–64, 92–93, and 209–211 each bind pyridoxal 5'-phosphate; these read YSN, GL, and AVT. K212 is subject to N6-(pyridoxal phosphate)lysine.

Belongs to the trans-sulfuration enzymes family. As to quaternary structure, homotetramer; dimer of active dimers. Requires pyridoxal 5'-phosphate as cofactor.

The enzyme catalyses L-alanine = D-alanine. The catalysed reaction is L-glutamate = D-glutamate. It catalyses the reaction L,L-cystathionine + H2O = L-homocysteine + pyruvate + NH4(+). Its pathway is cell wall biogenesis; peptidoglycan biosynthesis. Catalyzes the racemization of L-alanine to D-alanine, and of L-glutamate to D-glutamate. The activity is low, but likely physiological since W.pipientis wMel lacks canonical alr and murI genes, while D-alanine and D-glutamate are essential components of peptidoglycan. Also displays a vestigial cystathionine beta-lyase (CBL) activity, cleaving cystathionine to homocysteine and pyruvate; however, this reaction seems not to be physiologically relevant since the only met gene in the genome of this obligately intracellular parasitic bacterium is metC, demonstrating that it is a methionine auxotroph. This chain is L-alanine/L-glutamate racemase, found in Wolbachia pipientis wMel.